The primary structure comprises 344 residues: L-sulfolactate dehydrogenase (344 aa).

The protein belongs to the LDH2/MDH2 oxidoreductase family.

It localises to the cytoplasm. The enzyme catalyses a (2S)-2-hydroxycarboxylate + NAD(+) = a 2-oxocarboxylate + NADH + H(+). It functions in the pathway cofactor biosynthesis; coenzyme M biosynthesis; sulfoacetaldehyde from phosphoenolpyruvate and sulfite: step 3/4. Its pathway is cofactor biosynthesis; 5,6,7,8-tetrahydromethanopterin biosynthesis. Its function is as follows. Catalyzes the reduction of sulfopyruvate to (R)-sulfolactate much more efficiently than the reverse reaction. Also catalyzes the reduction of oxaloacetate, alpha-ketoglutarate, and to a much lower extent, KHTCA, but not pyruvate. Involved in the biosynthesis of both coenzyme M (with (R)-sulfolactate) and methanopterin (with alpha-ketoglutarate). The chain is L-sulfolactate dehydrogenase (comC) from Methanocaldococcus jannaschii (strain ATCC 43067 / DSM 2661 / JAL-1 / JCM 10045 / NBRC 100440) (Methanococcus jannaschii).